The following is a 348-amino-acid chain: D-fructose 1,6-bisphosphatase class 2/sedoheptulose 1,7-bisphosphatase 2 (348 aa).

Aspartate 33, glutamate 57, aspartate 97, and glutamate 100 together coordinate Mn(2+). Residues 100–102 (EGT), tyrosine 131, 176–178 (RER), and 198–200 (DGD) contribute to the substrate site. Glutamate 225 provides a ligand contact to Mn(2+).

Belongs to the FBPase class 2 family. In terms of assembly, homotetramer.

It catalyses the reaction beta-D-fructose 1,6-bisphosphate + H2O = beta-D-fructose 6-phosphate + phosphate. The enzyme catalyses D-sedoheptulose 1,7-bisphosphate + H2O = D-sedoheptulose 7-phosphate + phosphate. It participates in carbohydrate biosynthesis; Calvin cycle. Its function is as follows. Catalyzes the hydrolysis of fructose 1,6-bisphosphate (Fru 1,6-P2) and sedoheptulose 1,7-bisphosphate (Sed 1,7-P2) to fructose 6-phosphate and sedoheptulose 7-phosphate, respectively. The chain is D-fructose 1,6-bisphosphatase class 2/sedoheptulose 1,7-bisphosphatase 2 from Acaryochloris marina (strain MBIC 11017).